Reading from the N-terminus, the 281-residue chain is Fructose-bisphosphate aldolase class 1 (281 aa).

The active-site Schiff-base intermediate with dihydroxyacetone-P is K191.

The protein belongs to the DeoC/FbaB aldolase family. As to quaternary structure, homooctamer.

It localises to the cytoplasm. It carries out the reaction beta-D-fructose 1,6-bisphosphate = D-glyceraldehyde 3-phosphate + dihydroxyacetone phosphate. With respect to regulation, activated by citrate. The chain is Fructose-bisphosphate aldolase class 1 (fba) from Pyrococcus furiosus (strain ATCC 43587 / DSM 3638 / JCM 8422 / Vc1).